A 122-amino-acid polypeptide reads, in one-letter code: Large ribosomal subunit protein uL14 (122 aa).

The protein belongs to the universal ribosomal protein uL14 family. In terms of assembly, part of the 50S ribosomal subunit. Forms a cluster with proteins L3 and L19. In the 70S ribosome, L14 and L19 interact and together make contacts with the 16S rRNA in bridges B5 and B8.

In terms of biological role, binds to 23S rRNA. Forms part of two intersubunit bridges in the 70S ribosome. This is Large ribosomal subunit protein uL14 from Rhodococcus jostii (strain RHA1).